The primary structure comprises 217 residues: UPF0502 protein ESA_02280 (217 aa).

The protein belongs to the UPF0502 family.

The chain is UPF0502 protein ESA_02280 from Cronobacter sakazakii (strain ATCC BAA-894) (Enterobacter sakazakii).